Reading from the N-terminus, the 582-residue chain is Membrane protein insertase YidC (582 aa).

Transmembrane regions (helical) follow at residues Asn4–Gln24, Ile376–Phe396, Ala446–Phe466, and Phe542–Trp562.

The protein belongs to the OXA1/ALB3/YidC family. Type 1 subfamily. In terms of assembly, interacts with the Sec translocase complex via SecD. Specifically interacts with transmembrane segments of nascent integral membrane proteins during membrane integration.

The protein resides in the cell inner membrane. Functionally, required for the insertion and/or proper folding and/or complex formation of integral membrane proteins into the membrane. Involved in integration of membrane proteins that insert both dependently and independently of the Sec translocase complex, as well as at least some lipoproteins. Aids folding of multispanning membrane proteins. The protein is Membrane protein insertase YidC of Treponema denticola (strain ATCC 35405 / DSM 14222 / CIP 103919 / JCM 8153 / KCTC 15104).